The primary structure comprises 116 residues: Large ribosomal subunit protein bL19 (116 aa).

The protein belongs to the bacterial ribosomal protein bL19 family.

This protein is located at the 30S-50S ribosomal subunit interface and may play a role in the structure and function of the aminoacyl-tRNA binding site. This chain is Large ribosomal subunit protein bL19, found in Staphylococcus epidermidis (strain ATCC 35984 / DSM 28319 / BCRC 17069 / CCUG 31568 / BM 3577 / RP62A).